A 676-amino-acid chain; its full sequence is Envelope glycoprotein (676 aa).

Residues 1-34 (MACSTLSKSPKDKIDPRDLLIPLILFLSLKGARS) form the signal peptide. Positions 35–270 (AAPGSSPHQV…SYQNLGPRIP (236 aa)) are receptor-binding domain (RBD). The Extracellular segment spans residues 35 to 620 (AAPGSSPHQV…FNRSPWFTTL (586 aa)). Asn46 is a glycosylation site (N-linked (GlcNAc...) asparagine; by host). 5 cysteine pairs are disulfide-bonded: Cys80/Cys132, Cys106/Cys121, Cys107/Cys117, Cys155/Cys175, and Cys167/Cys180. His89 is a binding site for Zn(2+). Asp120 contributes to the Zn(2+) binding site. An N-linked (GlcNAc...) asparagine; by host glycan is attached at Asn202. Residues Cys212 and Cys218 are joined by a disulfide bond. The segment at 287-321 (NPLPKPAKSPPASSSTPTLISPSPTPTQPPPAGTG) is disordered. The segment covering 296 to 308 (PPASSSTPTLISP) has biased composition (low complexity). The span at 309–318 (SPTPTQPPPA) shows a compositional bias: pro residues. Asn336 is a glycosylation site (N-linked (GlcNAc...) asparagine; by host). Disulfide bonds link Cys346-Cys349, Cys346-Cys573, Cys376-Cys430, Cys395-Cys407, Cys437-Cys450, and Cys565-Cys572. Positions 346–349 (CWLC) match the CXXC motif. Asn368 and Asn375 each carry an N-linked (GlcNAc...) asparagine; by host glycan. 2 N-linked (GlcNAc...) asparagine; by host glycosylation sites follow: Asn408 and Asn444. The interval 482–502 (VSLTLALLLGGLTMGGIAAGV) is fusion peptide. The stretch at 513 to 547 (QQFQQLHAAVQDDLKEVEKSITNLEKSLTSLSEVV) forms a coiled coil. Residues 548 to 564 (LQNRRGLDLLFLKEGGL) are immunosuppression. A CX6CC motif is present at residues 565-573 (CAALKEECC). The chain crosses the membrane as a helical span at residues 621–641 (ISTIMGPLIILLLILLFGPCI). Cys640 is lipidated: S-palmitoyl cysteine; by host. Over 642-676 (LNRLVQFVKDRISVVQALVLTQQYHQLKPLEYEPQ) the chain is Cytoplasmic. The YXXL motif; contains endocytosis signal signature appears at 665-668 (YHQL).

As to quaternary structure, the mature envelope protein (Env) consists of a trimer of SU-TM heterodimers attached by a labile interchain disulfide bond. Specific enzymatic cleavages in vivo yield mature proteins. Envelope glycoproteins are synthesized as an inactive precursor that is N-glycosylated and processed likely by host cell furin or by a furin-like protease in the Golgi to yield the mature SU and TM proteins. The cleavage site between SU and TM requires the minimal sequence [KR]-X-[KR]-R. The R-peptide is released from the C-terminus of the cytoplasmic tail of the TM protein upon particle formation as a result of proteolytic cleavage by the viral protease. Cleavage of this peptide is required for TM to become fusogenic. Post-translationally, the CXXC motif is highly conserved across a broad range of retroviral envelope proteins. It is thought to participate in the formation of a labile disulfide bond possibly with the CX6CC motif present in the transmembrane protein. Isomerization of the intersubunit disulfide bond to an SU intrachain disulfide bond is thought to occur upon receptor recognition in order to allow membrane fusion. In terms of processing, the transmembrane protein is palmitoylated. The R-peptide is palmitoylated.

The protein resides in the virion membrane. It is found in the host cell membrane. In terms of biological role, the surface protein (SU) attaches the virus to the host cell by binding to its receptor. This interaction triggers the refolding of the transmembrane protein (TM) and is thought to activate its fusogenic potential by unmasking its fusion peptide. Fusion occurs at the host cell plasma membrane. The transmembrane protein (TM) acts as a class I viral fusion protein. Under the current model, the protein has at least 3 conformational states: pre-fusion native state, pre-hairpin intermediate state, and post-fusion hairpin state. During viral and target cell membrane fusion, the coiled coil regions (heptad repeats) assume a trimer-of-hairpins structure, positioning the fusion peptide in close proximity to the C-terminal region of the ectodomain. The formation of this structure appears to drive apposition and subsequent fusion of viral and target cell membranes. Membranes fusion leads to delivery of the nucleocapsid into the cytoplasm. The chain is Envelope glycoprotein (env) from Friend murine leukemia virus (isolate FB29) (FrMLV).